Here is a 194-residue protein sequence, read N- to C-terminus: Ribonuclease HII (194 aa).

The RNase H type-2 domain occupies isoleucine 3 to leucine 193. Positions 9, 10, and 101 each coordinate a divalent metal cation.

This sequence belongs to the RNase HII family. Mn(2+) serves as cofactor. Requires Mg(2+) as cofactor.

It localises to the cytoplasm. The enzyme catalyses Endonucleolytic cleavage to 5'-phosphomonoester.. Its function is as follows. Endonuclease that specifically degrades the RNA of RNA-DNA hybrids. The polypeptide is Ribonuclease HII (rnhB) (Neisseria meningitidis serogroup A / serotype 4A (strain DSM 15465 / Z2491)).